We begin with the raw amino-acid sequence, 407 residues long: Arrestin homolog (407 aa).

This sequence belongs to the arrestin family.

The chain is Arrestin homolog from Locusta migratoria (Migratory locust).